The following is a 105-amino-acid chain: Cuticle protein AMP2 (105 aa).

The segment at 1–21 (DRDAQTLTDERSDQGDGNFRY) is disordered. The 66-residue stretch at 16 to 81 (DGNFRYEFET…PSSDLLPVGP (66 aa)) folds into the Chitin-binding type R&amp;R domain.

In terms of tissue distribution, arthrodial membrane.

In Homarus americanus (American lobster), this protein is Cuticle protein AMP2.